The primary structure comprises 231 residues: ATP phosphoribosyltransferase (231 aa).

It belongs to the ATP phosphoribosyltransferase family. Short subfamily. As to quaternary structure, heteromultimer composed of HisG and HisZ subunits.

The protein localises to the cytoplasm. It catalyses the reaction 1-(5-phospho-beta-D-ribosyl)-ATP + diphosphate = 5-phospho-alpha-D-ribose 1-diphosphate + ATP. It functions in the pathway amino-acid biosynthesis; L-histidine biosynthesis; L-histidine from 5-phospho-alpha-D-ribose 1-diphosphate: step 1/9. In terms of biological role, catalyzes the condensation of ATP and 5-phosphoribose 1-diphosphate to form N'-(5'-phosphoribosyl)-ATP (PR-ATP). Has a crucial role in the pathway because the rate of histidine biosynthesis seems to be controlled primarily by regulation of HisG enzymatic activity. The sequence is that of ATP phosphoribosyltransferase (hisG) from Sinorhizobium fredii (strain NBRC 101917 / NGR234).